Consider the following 487-residue polypeptide: DNA polymerase delta small subunit (487 aa).

M1 carries the N-acetylmethionine modification. At S20 the chain carries Phosphoserine.

It belongs to the DNA polymerase delta/II small subunit family. As to quaternary structure, DNA polymerase delta is a heterotrimer of POL3, POL32 and HYS2.

The protein resides in the nucleus. It catalyses the reaction DNA(n) + a 2'-deoxyribonucleoside 5'-triphosphate = DNA(n+1) + diphosphate. In terms of biological role, DNA polymerase delta (DNA polymerase III) participates in chromosomal DNA replication. It is required during synthesis of the leading and lagging DNA strands at the replication fork and binds at/or near replication origins and moves along DNA with the replication fork. It has 3'-5' proofreading exonuclease activity that correct errors arising during DNA replication. It is also involved in DNA synthesis during DNA repair. This is DNA polymerase delta small subunit (POL31) from Saccharomyces cerevisiae (strain ATCC 204508 / S288c) (Baker's yeast).